We begin with the raw amino-acid sequence, 715 residues long: Serine/arginine repetitive matrix protein 5 (715 aa).

Residues 1 to 13 (MSSPKRSSKPSMS) show a composition bias toward low complexity. A disordered region spans residues 1 to 715 (MSSPKRSSKP…RSSSSSSKLA (715 aa)). Residues 32-59 (LKSTKSATPNRSLVPTKPATSRNSVMSP) show a composition bias toward polar residues. Low complexity predominate over residues 60-79 (SSSKSTKSTSTKRAPSNRPS). The span at 80-90 (SRSRVRSKART) shows a compositional bias: basic residues. Over residues 92–104 (SRVSTDTRTSKAS) the composition is skewed to polar residues. The span at 112–136 (HQRRGTHSRGRTPGRRGSRSSKRSP) shows a compositional bias: basic residues. 2 stretches are compositionally biased toward polar residues: residues 213–224 (TPSTAKCQTPTG) and 257–272 (YSPT…YNQA). Positions 273-285 (STRSRPQSHSQSR) are enriched in low complexity. A compositionally biased stretch (basic residues) spans 286–320 (SPRRSRSGSQKRTHSRVRSHSWKRNHSRARSRTRK). Basic and acidic residues-rich tracts occupy residues 359–388 (PSKE…KESG) and 397–521 (KQRD…ERDH). The segment covering 522 to 536 (RRSRSPSKERQRRQS) has biased composition (basic residues). Basic and acidic residues-rich tracts occupy residues 539-595 (PNKE…DHSR) and 611-628 (SSKE…KEGN). Over residues 657-666 (TRTSSLSQNR) the composition is skewed to polar residues. Residues 667-681 (TPSKTSSHSPSTFPS) are compositionally biased toward low complexity. Residues 682–715 (GGQTLSQDDSQADATTSKATLPGERSSSSSSKLA) are compositionally biased toward polar residues.

The sequence is that of Serine/arginine repetitive matrix protein 5 (SRRM5) from Homo sapiens (Human).